Reading from the N-terminus, the 680-residue chain is Methionine--tRNA ligase (680 aa).

The 'HIGH' region motif lies at 15-25 (PYANGPVHIGH). Zn(2+) is bound by residues Cys-147, Cys-150, Cys-160, and Cys-163. A 'KMSKS' region motif is present at residues 332–336 (KISTS). Thr-335 contacts ATP. Positions 579–680 (DFLKLDIRVG…AEVAAGSQVK (102 aa)) constitute a tRNA-binding domain.

Belongs to the class-I aminoacyl-tRNA synthetase family. MetG type 1 subfamily. Homodimer. It depends on Zn(2+) as a cofactor.

It localises to the cytoplasm. It carries out the reaction tRNA(Met) + L-methionine + ATP = L-methionyl-tRNA(Met) + AMP + diphosphate. In terms of biological role, is required not only for elongation of protein synthesis but also for the initiation of all mRNA translation through initiator tRNA(fMet) aminoacylation. In Porphyromonas gingivalis (strain ATCC BAA-308 / W83), this protein is Methionine--tRNA ligase.